The primary structure comprises 155 residues: Crossover junction endodeoxyribonuclease RuvC (155 aa).

Catalysis depends on residues Asp7, Glu68, and Asp140. Asp7, Glu68, and Asp140 together coordinate Mg(2+).

The protein belongs to the RuvC family. Homodimer which binds Holliday junction (HJ) DNA. The HJ becomes 2-fold symmetrical on binding to RuvC with unstacked arms; it has a different conformation from HJ DNA in complex with RuvA. In the full resolvosome a probable DNA-RuvA(4)-RuvB(12)-RuvC(2) complex forms which resolves the HJ. Mg(2+) serves as cofactor.

The protein localises to the cytoplasm. It catalyses the reaction Endonucleolytic cleavage at a junction such as a reciprocal single-stranded crossover between two homologous DNA duplexes (Holliday junction).. Its function is as follows. The RuvA-RuvB-RuvC complex processes Holliday junction (HJ) DNA during genetic recombination and DNA repair. Endonuclease that resolves HJ intermediates. Cleaves cruciform DNA by making single-stranded nicks across the HJ at symmetrical positions within the homologous arms, yielding a 5'-phosphate and a 3'-hydroxyl group; requires a central core of homology in the junction. The consensus cleavage sequence is 5'-(A/T)TT(C/G)-3'. Cleavage occurs on the 3'-side of the TT dinucleotide at the point of strand exchange. HJ branch migration catalyzed by RuvA-RuvB allows RuvC to scan DNA until it finds its consensus sequence, where it cleaves and resolves the cruciform DNA. This Prochlorococcus marinus (strain SARG / CCMP1375 / SS120) protein is Crossover junction endodeoxyribonuclease RuvC.